Reading from the N-terminus, the 87-residue chain is UPF0473 protein Daud_0916 (87 aa).

The protein belongs to the UPF0473 family.

The chain is UPF0473 protein Daud_0916 from Desulforudis audaxviator (strain MP104C).